A 364-amino-acid chain; its full sequence is GTPase Obg (364 aa).

The region spanning 1–159 is the Obg domain; the sequence is MKFVDEAYID…KSLKLELKVL (159 aa). Positions 160 to 334 constitute an OBG-type G domain; that stretch reads ADVGLLGMPN…LVKTIYQHVK (175 aa). Residues 166 to 173, 191 to 195, 213 to 216, 284 to 287, and 315 to 317 each bind GTP; these read GMPNAGKS, FTTLH, DLPG, NKLD, and SAL. Residues Ser173 and Thr193 each coordinate Mg(2+). Positions 337–364 are disordered; sequence QKSEQPEEEVDPRFIELPPEPAKPASSD.

The protein belongs to the TRAFAC class OBG-HflX-like GTPase superfamily. OBG GTPase family. Monomer. Requires Mg(2+) as cofactor.

The protein resides in the cytoplasm. In terms of biological role, an essential GTPase which binds GTP, GDP and possibly (p)ppGpp with moderate affinity, with high nucleotide exchange rates and a fairly low GTP hydrolysis rate. Plays a role in control of the cell cycle, stress response, ribosome biogenesis and in those bacteria that undergo differentiation, in morphogenesis control. The protein is GTPase Obg of Polaromonas naphthalenivorans (strain CJ2).